Here is a 364-residue protein sequence, read N- to C-terminus: Aminomethyltransferase (364 aa).

Belongs to the GcvT family. The glycine cleavage system is composed of four proteins: P, T, L and H.

The catalysed reaction is N(6)-[(R)-S(8)-aminomethyldihydrolipoyl]-L-lysyl-[protein] + (6S)-5,6,7,8-tetrahydrofolate = N(6)-[(R)-dihydrolipoyl]-L-lysyl-[protein] + (6R)-5,10-methylene-5,6,7,8-tetrahydrofolate + NH4(+). In terms of biological role, the glycine cleavage system catalyzes the degradation of glycine. This is Aminomethyltransferase from Desulforamulus reducens (strain ATCC BAA-1160 / DSM 100696 / MI-1) (Desulfotomaculum reducens).